The sequence spans 601 residues: MSNDQGSQFLRAPIVVVLGHVDAGKTTLLDKIRGTAVAKREPGTMTQHIGASFLPWKALEAVCGSLVSQIRAEVVIPGFLVIDTPGHEAFSNLRRRGGSIADIAILVVDVLRGLEQQTFESIDILRERKVPFIVAVNKIDKIPGWKSFPNTPFVESVKRQSEAAQLKLEELLSYIIQQFASLGFRSDRYDRIRDFTRVLALVPVSAVTGEGIPDLLLVLAGLAQRYLKGRLLASIAPGKGVILELKEEAGLGMTATLILYDGVIRRGDIVVTGGIEGAFSTRVRALLMPKPLDEMRSPEDRFLEVERIVAAAGVKLVAEGLEKAVPGAPLFVAVSEEEVGRLKQLVEEEISGVKFERDVVGVVVKADTLGTLEALVGYLKKQGIPIRVADIGPVVKRDVVQASMVKEKDPLYAAILAFNVKILPEAQDEAARHGIPVFQERIMYKLVENYQKWLQETRDAEVRKAFEKITPPAVVQILPGYVFRRRDPIIVGVRVVCGRIRSGVPLITKDGREIGEIMQIKEHDKVLDVVSEGAEVAISIRSKAIVGRQVKEGDYLYSNLSIEEINRLLEKYEKYLAENEKSYLRKLMRFKMGLSKEIEYP.

The 218-residue stretch at 10–227 (LRAPIVVVLG…VLAGLAQRYL (218 aa)) folds into the tr-type G domain. The interval 19–26 (GHVDAGKT) is G1. Residue 19–26 (GHVDAGKT) participates in GTP binding. The interval 44-48 (TMTQH) is G2. The interval 83 to 86 (DTPG) is G3. Residues 83 to 87 (DTPGH) and 137 to 140 (NKID) contribute to the GTP site. Residues 137 to 140 (NKID) form a G4 region. The segment at 205 to 207 (SAV) is G5.

This sequence belongs to the TRAFAC class translation factor GTPase superfamily. Classic translation factor GTPase family. IF-2 subfamily.

Its function is as follows. Function in general translation initiation by promoting the binding of the formylmethionine-tRNA to ribosomes. Seems to function along with eIF-2. This Thermofilum pendens (strain DSM 2475 / Hrk 5) protein is Probable translation initiation factor IF-2.